Reading from the N-terminus, the 410-residue chain is Calsequestrin-2 (410 aa).

An N-terminal signal peptide occupies residues 1–19 (MKRTHLFIAGLYLLASCRA). A calcium regulated hydrophobic site region spans residues 221–242 (MDEPIAIPDKPYTEEELVEFVK). Tyr-282 is subject to Phosphotyrosine. N-linked (GlcNAc...) asparagine glycans are attached at residues Asn-335 and Asn-395. Residues 364-410 (DVLSGKINTEDDDNEEGDDGDDDEDDDDDDGNNSDEESNDDSDDDDE) are disordered. The segment covering 373-410 (EDDDNEEGDDGDDDEDDDDDDGNNSDEESNDDSDDDDE) has biased composition (acidic residues). Ser-397, Ser-401, and Ser-405 each carry phosphoserine; by CK2.

The protein belongs to the calsequestrin family. As to quaternary structure, interacts with ASPH. Monomer, homodimer and homooligomer. Mostly monomeric in the absence of calcium. Forms higher oligomers in a calcium-dependent manner. Dimers associate to form tetramers, that then form linear homomer chains. Interacts with TRDN. Post-translationally, phosphorylation in the C-terminus, probably by CK2, moderately increases calcium buffering capacity. In terms of processing, N-glycosylated. As to expression, detected in heart muscle (at protein level).

The protein localises to the sarcoplasmic reticulum lumen. In terms of biological role, calsequestrin is a high-capacity, moderate affinity, calcium-binding protein and thus acts as an internal calcium store in muscle. Calcium ions are bound by clusters of acidic residues at the protein surface, especially at the interface between subunits. Can bind around 60 Ca(2+) ions. Regulates the release of lumenal Ca(2+) via the calcium release channel RYR2; this plays an important role in triggering muscle contraction. Plays a role in excitation-contraction coupling in the heart and in regulating the rate of heart beats. The chain is Calsequestrin-2 (CASQ2) from Canis lupus familiaris (Dog).